The following is a 121-amino-acid chain: 18 kDa learning-associated protein of slug (121 aa).

Disordered stretches follow at residues 44–67 and 95–121; these read TMKT…GSME and AVKK…AIKW. Residues 45–64 are compositionally biased toward polar residues; it reads MKTTEPIQENKTSEGTSTDG.

The protein belongs to the learning-associated protein family. Expressed predominantly in cerebral ganglia (at protein level). The mRNA is highly expressed in cerebral ganglia, and is detected at lower levels in visceral-pedal ganglia, head, and body, but is not detected in the tail.

It is found in the cytoplasm. Its subcellular location is the secreted. In terms of biological role, may be involved in modulating long-term memory formation and retention, at least with respect to odor-taste associative learning. The polypeptide is 18 kDa learning-associated protein of slug (Lehmannia marginata (Tree slug)).